The following is a 221-amino-acid chain: MKVSMSLILITFWALVTIAKAYDPSPLQDFCVAIDDPKNGVFVNGKFCKDPKQAKAEDFFSSGLNQAGITNNKVKSNVTTVNVDQIPGLNTLGISLVRIDYAPYGQNPPHTHPRATEILVLVEGTLYVGFVSSNQDNNRLFAKVLNPGDVFVFPIGMIHFQVNIGKTPAVAFAGLSSQNAGVITIADTVFGSTPPINPDILAQAFQLDVNVVKDLEAKFKN.

Positions 1–21 are cleaved as a signal peptide; it reads MKVSMSLILITFWALVTIAKA. A disulfide bridge connects residues Cys-31 and Cys-48. The Cupin type-1 domain maps to 62-213; that stretch reads SGLNQAGITN…AFQLDVNVVK (152 aa). Asn-77 is a glycosylation site (N-linked (GlcNAc...) asparagine). Mn(2+) contacts are provided by His-110, His-112, Glu-117, and His-159.

The protein belongs to the germin family. In terms of assembly, oligomer (believed to be a pentamer but probably hexamer).

The protein resides in the secreted. It is found in the extracellular space. It localises to the apoplast. Its function is as follows. May play a role in plant defense. Probably has no oxalate oxidase activity even if the active site is conserved. In Arabidopsis thaliana (Mouse-ear cress), this protein is Germin-like protein subfamily 1 member 15.